We begin with the raw amino-acid sequence, 229 residues long: CRISPR pre-crRNA endoribonuclease Cas5d (229 aa).

The protein belongs to the CRISPR-associated protein Cas5 family. Subtype I-C/Dvulg subfamily. The cofactor is Does not require a metal cofactor..

Its function is as follows. CRISPR (clustered regularly interspaced short palindromic repeat) is an adaptive immune system that provides protection against mobile genetic elements (viruses, transposable elements and conjugative plasmids). CRISPR clusters contain spacers, sequences complementary to antecedent mobile elements, and target invading nucleic acids. CRISPR clusters are transcribed and processed into CRISPR RNA (crRNA). This protein is a sequence-specific endonuclease that cleaves pre-crRNA into mature crRNA, possibly by an intramolecular attack of the 2'-hydroxyl group of G26 on the scissile phosphodiester, cutting the precursor 3' to G26 residue yielding 5'-hydroxyl and 2' and/or 3' ends lacking a hydroxyl group (perhaps a 2'/3' cyclic phosphodiester). Requires between 4 and 8 nt downstream of the cleavage site for both binding and cleavage of pre-crRNA. Substitution with dG at this position abolishes cleavage but not RNA binding. Does not cleave pre-crRNA associated with the M.succiniciproducens strain MBEL55E Cas5 protein (AC Q65TW5) CRISPR locus. This chain is CRISPR pre-crRNA endoribonuclease Cas5d, found in Thermus thermophilus (strain ATCC BAA-163 / DSM 7039 / HB27).